Consider the following 152-residue polypeptide: Small ribosomal subunit protein uS13 (152 aa).

Belongs to the universal ribosomal protein uS13 family. As to quaternary structure, part of the 30S ribosomal subunit. Forms a loose heterodimer with protein S19. Forms two bridges to the 50S subunit in the 70S ribosome.

Its function is as follows. Located at the top of the head of the 30S subunit, it contacts several helices of the 16S rRNA. In the 70S ribosome it contacts the 23S rRNA (bridge B1a) and protein L5 of the 50S subunit (bridge B1b), connecting the 2 subunits; these bridges are implicated in subunit movement. The chain is Small ribosomal subunit protein uS13 from Pyrobaculum aerophilum (strain ATCC 51768 / DSM 7523 / JCM 9630 / CIP 104966 / NBRC 100827 / IM2).